A 140-amino-acid chain; its full sequence is Putative pre-16S rRNA nuclease (140 aa).

This sequence belongs to the YqgF nuclease family.

Its subcellular location is the cytoplasm. Its function is as follows. Could be a nuclease involved in processing of the 5'-end of pre-16S rRNA. This Vibrio vulnificus (strain CMCP6) protein is Putative pre-16S rRNA nuclease.